We begin with the raw amino-acid sequence, 192 residues long: Sarcoplasmic calcium-binding protein, beta chain (192 aa).

Alanine 1 carries the post-translational modification N-acetylalanine. 4 EF-hand domains span residues 4–39 (WDNR…VTLI), 56–91 (IMAN…NCKG), 100–135 (AFKV…RSAF), and 136–171 (ADVK…YAQF). Residues aspartate 17, aspartate 19, aspartate 21, aspartate 28, aspartate 69, asparagine 71, aspartate 73, glutamate 75, glutamate 80, aspartate 113, aspartate 115, aspartate 117, methionine 119, and glutamate 124 each contribute to the Ca(2+) site.

As to quaternary structure, SCPs from crayfish, lobster, and shrimp are polymorphic dimers; three isotypes (alpha-alpha, alpha-beta, and beta-beta) have been identified.

Like parvalbumins, SCPs seem to be more abundant in fast contracting muscles, but no functional relationship can be established from this distribution. This chain is Sarcoplasmic calcium-binding protein, beta chain, found in Penaeus sp. (Penoeid shrimp).